Consider the following 572-residue polypeptide: Mitochondrial distribution and morphology protein 34 (572 aa).

The 195-residue stretch at 1 to 195 folds into the SMP-LTD domain; it reads MAFNFNWSPL…LPAIIHRLSL (195 aa). Disordered regions lie at residues 208–236, 296–405, 455–518, and 551–572; these read LQTQTESANGEGPGQDPLASPPQDPVDAL, PSDQ…CSAP, RDTA…PFIN, and NACGPFWDRHSQEESPPPAYGH. The span at 296 to 347 shows a compositional bias: polar residues; the sequence is PSDQTDASGGVTSPFSPVLSRTQSQVGSMSSFPDSASMVSNQSRSSTPSHTF. Positions 358 to 370 are enriched in basic residues; the sequence is RHSKAHARKRKKR. Basic and acidic residues predominate over residues 371–381; the sequence is VVDLRRPKTTD. Polar residues-rich tracts occupy residues 387 to 401 and 498 to 511; these read SDESAFTESTSTPSI and ATGSSAGSSRQLPS.

The protein belongs to the MDM34 family. Component of the ER-mitochondria encounter structure (ERMES) or MDM complex, composed of mmm1, mdm10, mdm12 and mdm34.

The protein localises to the mitochondrion outer membrane. Its function is as follows. Component of the ERMES/MDM complex, which serves as a molecular tether to connect the endoplasmic reticulum (ER) and mitochondria. Components of this complex are involved in the control of mitochondrial shape and protein biogenesis, and function in nonvesicular lipid trafficking between the ER and mitochondria. Mdm34 is required for the interaction of the ER-resident membrane protein mmm1 and the outer mitochondrial membrane-resident beta-barrel protein mdm10. The protein is Mitochondrial distribution and morphology protein 34 of Neosartorya fischeri (strain ATCC 1020 / DSM 3700 / CBS 544.65 / FGSC A1164 / JCM 1740 / NRRL 181 / WB 181) (Aspergillus fischerianus).